A 44-amino-acid chain; its full sequence is Large ribosomal subunit protein bL34 (44 aa).

The protein belongs to the bacterial ribosomal protein bL34 family.

This chain is Large ribosomal subunit protein bL34, found in Wolbachia sp. subsp. Brugia malayi (strain TRS).